Consider the following 70-residue polypeptide: Kunitz-type serine protease inhibitor BmKTT-3 (70 aa).

Residues C7–C57 form the BPTI/Kunitz inhibitor domain. Cystine bridges form between C7/C57, C16/C40, and C32/C53.

The protein belongs to the venom Kunitz-type family. Scorpion delta-Ktx subfamily. Delta-Ktx 1 sub-subfamily. In terms of tissue distribution, expressed by the venom gland.

Its subcellular location is the secreted. Its function is as follows. Serine protease inhibitor that inhibits 85% of the activity of trypsin at a molar ratio of 4:1 (Ki=760 nM). The polypeptide is Kunitz-type serine protease inhibitor BmKTT-3 (Olivierus martensii (Manchurian scorpion)).